A 397-amino-acid polypeptide reads, in one-letter code: Chalcone synthase 2 (397 aa).

Residue C168 is part of the active site.

Belongs to the thiolase-like superfamily. Chalcone/stilbene synthases family.

It carries out the reaction (E)-4-coumaroyl-CoA + 3 malonyl-CoA + 3 H(+) = 2',4,4',6'-tetrahydroxychalcone + 3 CO2 + 4 CoA. Its pathway is secondary metabolite biosynthesis; flavonoid biosynthesis. Its function is as follows. The primary product of this enzyme is 4,2',4',6'-tetrahydroxychalcone (also termed naringenin-chalcone or chalcone) which can under specific conditions spontaneously isomerize into naringenin. The polypeptide is Chalcone synthase 2 (CHS2) (Daucus carota (Wild carrot)).